We begin with the raw amino-acid sequence, 1837 residues long: MAQQQQQQQHHHHLQHQQQQQQQQQLQHHSNLLLLQQQQQQQQQQQQQQQQLLQQEQQLQQYDNNLYSQNYNMEEYERRRRREREKYERQQGIQSDDRETSLFSEPRRLTEGDAEITAALGEFGDARNYINQYTVGISRHAPGGGSGNGSIGNNPRLQAPMIQQQVSSSISSSASVASSLLPPGLGQTQQQQQQQQQQQQPRPPTYLKQADNKPPYNGRGGYPGQPMKNDIPSSSGMAPPRGPPKLNSNSSSITNNAAASSSSSLLGPPISTQVPNGREKSFLGPPTTGTALHNGGGRFAQPVSNKRPGVGIQPPPPQEKDVRSMLSEMKNHFQVTPLNPIAATPQAPTRENYNLNAPNKFKYAFDIVDPIMPLLNSPPSVTPSSLITPIAPMTSPIAPLLTTPPQASQLPLGSGSGNGAAISATSLSTTTAAAAAAAAVAGVAATVAATVAPIQQLPPTPPKAMSVTPPTAKPLKIEKNPILEKQDSCLENDLELSESEDERKKDGRSPGSSSNGSESDSTESGSESSSKGEHNHHHHHQQQQQQTQQQQLHGHHPQSHHHQQFLQQQLQRQQQQQQQQQQLTANGGKKKYSQTIIASGANTITGLLTSSGGLGSSSGNNSSGGGGGSGNGGTTSSSSGGSMGGSGGSSSSGGASGGGGGGGGSGSSSGIGSGSSSNKTPSPTDSNKWNLSRFFHKPTSQTSSESVSPGNVSMKVPGILPGGAQIIPESIDVTTAIVKNEKIHHDDHLMDIDECDEDDDDVDEQHQQLRYGAGLSVTPVAVKKEEDLGLLTAAAIPKSQIKRESETQISHQRLSESATSGSSSSSCSSSDSAASASEVVPMPGPGETLQIPGVPAAITSVMRVPPINNMQKSQSMSVTVTPIAPLPASPKPRQKKPRKKKMMSVLTPPLLDSSDEDEPSTKHSSLVVAQAQAAVVPPPSTNSTTTSATTTKKGRGRPRKQQQQQSAGSGNLSSASAGSSSQAKGPTLTAAKKTLVKASASSSTSNTNSSSVLPRKREHSSQSSSNGNTPTKKMSSIPMMPAAAASAAATLLQPPAVAAANAVAASSSSSDEESSSSSCSTSKSSSSSSSSDDTETQKTNCRIVKLNKTVPVTAAMAPLAKRSSYHRRSGSSSPTSSSSETDKPNSNSHNNLGIAAISNSNSNSNNNVIVNNNLQQQAMPQQSPYKVPLSGGSQQLSSSDSSSSSSGSSSSSGDEDDAKREKNRERKPKSDKNKISTLTRIFNNKEGGAKKQGQVVIIDQSEEQLQQQQQQQQQVQIRDPLPPPSLLSQSGGVKQRMTPTQQQQLGAGLASPARTTTPLLTSLICKIDLSKLSRERILRLKKLAPSSSNQQNGHLTPNGHVVQGGSSPAGLSKVKHEHHQLHHHSQQAHSHPVKPEPELDSLYETKFRPTNVKQEFQLKQERDRDRNRERDQQQQPPPRRRKRSSSSSSSPYKEKKRKKEKTDPMLTNAKDQMLQINPMLLPSNNHERLSYDKYQLLQEDAAAAAAAAAAVAVVNSSNGQKLFQSSIGGGTGATAVGPLSIMAPSTCSEAVQTTPPTSVTGAGAPASLVSQPPPPPRLIYRSYFDREEEHPSDDLRKSKQFLQEAVQRKHAADSERDSFNQVTLYLEAVAYFLLTADAMERCSSETATWTMYKDTLSLIKFISSKFRPYQQSANCQQETHNKVAILSLRCQSLISLKLFKLRRVNCRAIINSLTDFFRNGRGDIVNGNTPSSISPSNSVGSQGSGSNTPPGKIVPQDIHNQLCKQNEYLTYVNSAHELWDQADRLVRTGNHLDFFRELDHENGPLTLHSTMHEVFRYVQAGLKTLRDAVSHPTHQSQ.

Disordered regions lie at residues 1-25 (MAQQ…QQQQ), 65-109 (NLYS…PRRL), 162-295 (IQQQ…LHNG), 455-592 (QQLP…KKKY), 605-712 (TGLL…PGNV), 797-852 (PKSQ…LQIP), 868-1250 (NNMQ…GGAK), 1267-1311 (QQQQ…GLAS), and 1344-1466 (APSS…DPML). Positions 16–25 (HQQQQQQQQQ) are enriched in low complexity. Over residues 84 to 109 (REKYERQQGIQSDDRETSLFSEPRRL) the composition is skewed to basic and acidic residues. Composition is skewed to low complexity over residues 162–179 (IQQQ…VASS), 187–200 (QTQQ…QQQQ), and 247–264 (NSNS…SSSS). Thr-468 bears the Phosphothreonine mark. The span at 475-488 (LKIEKNPILEKQDS) shows a compositional bias: basic and acidic residues. Positions 490-500 (LENDLELSESE) are enriched in acidic residues. Phosphoserine is present on residues Ser-497 and Ser-499. Low complexity-rich tracts occupy residues 509-529 (SPGS…SESS) and 542-552 (QQQQQTQQQQL). A compositionally biased stretch (basic residues) spans 553 to 563 (HGHHPQSHHHQ). The span at 564–583 (QFLQQQLQRQQQQQQQQQQL) shows a compositional bias: low complexity. Composition is skewed to gly residues over residues 612-633 (GGLG…GNGG) and 641-673 (GSMG…GIGS). Composition is skewed to polar residues over residues 678–690 (NKTP…NKWN) and 698–711 (PTSQ…SPGN). Residues 815–837 (SESATSGSSSSSCSSSDSAASAS) are compositionally biased toward low complexity. Over residues 868 to 880 (NNMQKSQSMSVTV) the composition is skewed to polar residues. The segment covering 892 to 902 (PRQKKPRKKKM) has biased composition (basic residues). Residues Ser-913 and Ser-914 each carry the phosphoserine modification. 2 stretches are compositionally biased toward low complexity: residues 927–951 (VVAQ…ATTT) and 961–1013 (QQQQ…SSVL). Residues 952-964 (KKGRGRPRKQQQQ) constitute a DNA-binding region (a.T hook). Phosphoserine is present on residues Ser-974 and Ser-976. Positions 1021–1033 (SQSSSNGNTPTKK) are enriched in polar residues. 4 stretches are compositionally biased toward low complexity: residues 1034-1049 (MSSI…SAAA), 1056-1091 (AVAA…SSSS), 1130-1139 (GSSSPTSSSS), and 1157-1173 (ISNS…VNNN). The segment covering 1174–1184 (LQQQAMPQQSP) has biased composition (polar residues). Residues 1189-1212 (LSGGSQQLSSSDSSSSSSGSSSSS) are compositionally biased toward low complexity. The segment covering 1217-1234 (DAKREKNRERKPKSDKNK) has biased composition (basic and acidic residues). Over residues 1267 to 1276 (QQQQQQQQVQ) the composition is skewed to low complexity. The span at 1345-1355 (PSSSNQQNGHL) shows a compositional bias: polar residues. The segment covering 1373-1386 (KVKHEHHQLHHHSQ) has biased composition (basic residues). Composition is skewed to basic and acidic residues over residues 1393-1407 (VKPE…ETKF) and 1416-1432 (FQLK…ERDQ). Ser-1517 is subject to Phosphoserine. Residues 1550 to 1560 (AVQTTPPTSVT) show a composition bias toward polar residues. Disordered stretches follow at residues 1550–1571 (AVQT…LVSQ) and 1727–1756 (GNTP…IVPQ). Over residues 1727-1747 (GNTPSSISPSNSVGSQGSGSN) the composition is skewed to low complexity.

Belongs to the AF4 family.

The protein resides in the nucleus. Its function is as follows. Has a role in transcriptional regulation. Acts in parallel with the Ras/MAPK and the PI3K/PKB pathways in the control of cell identity and cellular growth. Essential for regulation of the cytoskeleton and cell growth but not for cell proliferation or growth rate. Required specifically for the microtubule-based basal transport of lipid droplets. Plays a partially redundant function downstream of Raf in cell fate specification in the developing eye. Pair-rule protein that regulates embryonic cellularization, gastrulation and segmentation. In Drosophila willistoni (Fruit fly), this protein is AF4/FMR2 family member lilli.